The chain runs to 333 residues: Isopenicillin N synthase (333 aa).

Residues Arg-87, Tyr-91, and Tyr-191 each contribute to the isopenicillin N site. Arg-87, Tyr-91, Tyr-191, His-216, and Asp-218 together coordinate N-[(5S)-5-amino-5-carboxypentanoyl]-L-cysteinyl-D-valine. The Fe2OG dioxygenase domain occupies 180-290 (DTLSCRSLMI…RLSLPFFLHA (111 aa)). His-216, Asp-218, and His-272 together coordinate Fe(2+). Arg-281 serves as a coordination point for 2-oxoglutarate. Ser-283 contributes to the isopenicillin N binding site. N-[(5S)-5-amino-5-carboxypentanoyl]-L-cysteinyl-D-valine is bound at residue Ser-283.

It belongs to the iron/ascorbate-dependent oxidoreductase family. Fe cation serves as cofactor. The cofactor is L-ascorbate.

It catalyses the reaction N-[(5S)-5-amino-5-carboxypentanoyl]-L-cysteinyl-D-valine + O2 = isopenicillin N + 2 H2O. The protein operates within antibiotic biosynthesis; penicillin G biosynthesis; penicillin G from L-alpha-aminoadipate and L-cysteine and L-valine: step 2/3. In terms of biological role, removes, in the presence of oxygen, 4 hydrogen atoms from delta-L-(alpha-aminoadipyl)-L-cysteinyl-D-valine (ACV) to form the azetidinone and thiazolidine rings of isopenicillin. This Streptomyces microflavus (Streptomyces lipmanii) protein is Isopenicillin N synthase (pcbC).